The sequence spans 488 residues: Probable apyrase 5 (488 aa).

Positions 1–26 (MDALKVQILPDNQSSPSSTHMLTKPK) are disordered. Topologically, residues 1-32 (MDALKVQILPDNQSSPSSTHMLTKPKSKKATK) are cytoplasmic. Over residues 10–21 (PDNQSSPSSTHM) the composition is skewed to polar residues. The helical; Signal-anchor for type II membrane protein transmembrane segment at 33–53 (SIAMLIVASLAITLGLLFVFS) threads the bilayer. The Extracellular segment spans residues 54 to 488 (SNSVMFSASF…GKSRKMIGFK (435 aa)). 73 to 83 (VIIDAGSSGTR) contacts ATP. Catalysis depends on glutamate 196, which acts as the Proton acceptor. 220-230 (GIVELGGASAQ) contributes to the ATP binding site. The N-linked (GlcNAc...) asparagine glycan is linked to asparagine 251.

It belongs to the GDA1/CD39 NTPase family. The cofactor is Ca(2+). As to expression, highly expressed in young rosette leaves but only weakly in roots.

The protein resides in the membrane. It carries out the reaction a ribonucleoside 5'-triphosphate + 2 H2O = a ribonucleoside 5'-phosphate + 2 phosphate + 2 H(+). Catalyzes the hydrolysis of phosphoanhydride bonds of nucleoside tri- and di-phosphates. This chain is Probable apyrase 5 (APY5), found in Arabidopsis thaliana (Mouse-ear cress).